A 123-amino-acid chain; its full sequence is Ribosome-binding factor A (123 aa).

The protein belongs to the RbfA family. In terms of assembly, monomer. Binds 30S ribosomal subunits, but not 50S ribosomal subunits or 70S ribosomes.

It localises to the cytoplasm. In terms of biological role, one of several proteins that assist in the late maturation steps of the functional core of the 30S ribosomal subunit. Associates with free 30S ribosomal subunits (but not with 30S subunits that are part of 70S ribosomes or polysomes). Required for efficient processing of 16S rRNA. May interact with the 5'-terminal helix region of 16S rRNA. This chain is Ribosome-binding factor A, found in Trichlorobacter lovleyi (strain ATCC BAA-1151 / DSM 17278 / SZ) (Geobacter lovleyi).